Reading from the N-terminus, the 706-residue chain is SPX domain-containing membrane protein Os09g0521800 (706 aa).

The SPX domain maps to 2–145; it reads VNFSNKLTKD…GYKFTDYYVR (144 aa). 6 consecutive transmembrane segments (helical) span residues 251–271, 281–301, 318–338, 340–359, 378–398, and 414–434; these read MSLV…YIVV, LGAA…AQVF, LLFS…AFDL, SLTI…ARAV, AAFV…AGLL, and LPGW…WILF. Positions 475-498 are disordered; sequence SEQDEEDDNGDEEHNETLSSSTTT. Positions 476–488 are enriched in acidic residues; sequence EQDEEDDNGDEEH. Transmembrane regions (helical) follow at residues 520 to 540, 554 to 574, 583 to 603, 611 to 631, and 678 to 698; these read LLIY…SSVV, VFLA…GTYI, ILVA…KLTV, VCSA…NLSL, and LLNA…AATL.

It belongs to the major facilitator superfamily.

It localises to the membrane. This is SPX domain-containing membrane protein Os09g0521800 from Oryza sativa subsp. japonica (Rice).